The sequence spans 829 residues: Exocyst complex component SEC10b (829 aa).

Residues 244–266 adopt a coiled-coil conformation; the sequence is RGLEVAVANLQDYCNELENRLLS.

The protein belongs to the SEC10 family. The exocyst complex is composed of SEC3, SEC5, SEC6, SEC8, SEC10, EXO70A1 and EXO84B. Interacts with EXO84B. Binds to EXO70E2. Expressed in seedlings, roots, leaves and flowers.

It is found in the cytoplasm. The protein localises to the cytosol. The protein resides in the secreted. It localises to the extracellular exosome. Its function is as follows. Component of the exocyst complex involved in the docking of exocytic vesicles with fusion sites on the plasma membrane during regulated or polarized secretion. Involved in polarized cell growth and organ morphogenesis. During cytokinesis, involved in cell plate initiation, cell plate maturation and formation of new primary cell wall. This is Exocyst complex component SEC10b from Arabidopsis thaliana (Mouse-ear cress).